Consider the following 471-residue polypeptide: Reticulon-2 (471 aa).

3 disordered regions span residues Met-1–Leu-137, Ser-153–Ala-181, and Gln-205–Pro-234. Residues Ala-14 to Thr-25 show a composition bias toward low complexity. Basic and acidic residues predominate over residues Ser-32 to Phe-43. A Phosphoserine modification is found at Ser-44. Composition is skewed to polar residues over residues Pro-100–Ser-118 and Asp-159–Leu-168. Residues Glu-169–Ala-181 are compositionally biased toward acidic residues. Polar residues predominate over residues Gln-205–Gly-229. Ser-226 and Ser-228 each carry phosphoserine. The 200-residue stretch at Val-272–Glu-471 folds into the Reticulon domain. 2 consecutive transmembrane segments (helical) span residues Leu-295–Leu-315 and Leu-390–Leu-410.

As to quaternary structure, interacts with SPAST. Interacts with BACE1. Interacts (via first transmembrane domain) with ARL6IP5/GTRAP3-18. Interacts (via N-terminus) with SLC1A1/EAAC1; the interaction promotes cell surface expression of SLC1A1. As to expression, detected in skeletal and cardiac muscle (at protein level). Expressed predominantly in neural and muscular tissues.

Its subcellular location is the endoplasmic reticulum membrane. The protein localises to the sarcoplasmic reticulum membrane. The protein resides in the cell membrane. It localises to the sarcolemma. It is found in the T-tubule. Its subcellular location is the cytoplasm. The protein localises to the myofibril. The protein resides in the sarcomere. It localises to the z line. It is found in the cytoskeleton. In terms of biological role, inhibits amyloid precursor protein processing, probably by blocking BACE1 activity. Enhances trafficking of the glutamate transporter SLC1A1/EAAC1 from the endoplasmic reticulum to the cell surface. Plays a role in the translocation of SLC2A4/GLUT4 from intracellular membranes to the cell membrane which facilitates the uptake of glucose into the cell. This is Reticulon-2 from Mus musculus (Mouse).